The sequence spans 122 residues: Small ribosomal subunit protein uS13 (122 aa).

The interval 93 to 122 is disordered; that stretch reads RRGLPVRGQKTKTNARTRKGPKKTMANKKK.

Belongs to the universal ribosomal protein uS13 family. As to quaternary structure, part of the 30S ribosomal subunit. Forms a loose heterodimer with protein S19. Forms two bridges to the 50S subunit in the 70S ribosome.

Functionally, located at the top of the head of the 30S subunit, it contacts several helices of the 16S rRNA. In the 70S ribosome it contacts the 23S rRNA (bridge B1a) and protein L5 of the 50S subunit (bridge B1b), connecting the 2 subunits; these bridges are implicated in subunit movement. Contacts the tRNAs in the A and P-sites. This chain is Small ribosomal subunit protein uS13, found in Clostridium botulinum (strain Alaska E43 / Type E3).